The primary structure comprises 880 residues: Interference hedgehog (880 aa).

Residues 1–20 (MTLLTSSLLLFSLLTSRLEA) form the signal peptide. Topologically, residues 21–703 (IPVLEKSPAH…ETFNMSPMLT (683 aa)) are extracellular. Ig-like C2-type domains are found at residues 45–142 (PGVR…TARL), 132–232 (PLVV…ERIQ), 252–340 (PHLL…YIKV), and 346–432 (PQIV…LQVN). Intrachain disulfides connect Cys68/Cys126, Cys173/Cys220, Cys276/Cys324, and Cys367/Cys414. N-linked (GlcNAc...) asparagine glycans are attached at residues Asn102 and Asn209. The segment at 426-467 (GTLLQVNPKQIQEPRESGGTHRPKPNQGSKQKQMYPPTPPNV) is disordered. Fibronectin type-III domains lie at 461–567 (PPTP…LQPG) and 575–670 (VPEL…TQRP). A glycan (N-linked (GlcNAc...) asparagine) is linked at Asn466. Heparin is bound by residues Arg497, Lys501, Lys503, and Arg541. The N-linked (GlcNAc...) asparagine glycan is linked to Asn557. Positions 662-697 (LKQGRTQRPKTSTTEEPTLQMGDRDTTTPSHNETFN) are disordered. Composition is skewed to polar residues over residues 665–678 (GRTQRPKTSTTEEP) and 688–697 (TTPSHNETFN). The N-linked (GlcNAc...) asparagine glycan is linked to Asn693. Residues 704 to 724 (GTIGGGAVLILLLISTCLCVC) traverse the membrane as a helical segment. The Cytoplasmic segment spans residues 725–880 (RRRTSRSRGN…SSGSLNSVGV (156 aa)). 2 disordered regions span residues 728 to 762 (TSRSRGNNPNKPRMAELRDDFVPLGNCSPTKQRQR) and 775 to 880 (QQQQ…SVGV). 2 stretches are compositionally biased toward low complexity: residues 823–837 (RAGGSNGSNNGNNNN) and 864–880 (SSRSENLSSGSLNSVGV).

It belongs to the immunoglobulin superfamily. IHOG family. Homodimer. Heterotetramer; 2 iHog chains bind 2 hh chains when facilitated by heparin, heparin is required to promote high-affinity interactions between hh and iHog.

The protein resides in the membrane. Its function is as follows. Mediates response to the active Hedgehog (Hh) protein signal in embryos, functioning upstream or at the level of patched (ptc). The protein is Interference hedgehog of Drosophila sechellia (Fruit fly).